Reading from the N-terminus, the 103-residue chain is Histone H4 (103 aa).

Over residues 1-14 the composition is skewed to gly residues; that stretch reads MSGRGKGGKGLGKG. A disordered region spans residues 1–20; sequence MSGRGKGGKGLGKGGAKRHR. A DNA-binding region spans residues 17 to 21; sequence KRHRK.

Belongs to the histone H4 family. As to quaternary structure, the nucleosome is a histone octamer containing two molecules each of H2A, H2B, H3 and H4 assembled in one H3-H4 heterotetramer and two H2A-H2B heterodimers. The octamer wraps approximately 147 bp of DNA.

It is found in the nucleus. The protein localises to the chromosome. Functionally, core component of nucleosome. Nucleosomes wrap and compact DNA into chromatin, limiting DNA accessibility to the cellular machineries which require DNA as a template. Histones thereby play a central role in transcription regulation, DNA repair, DNA replication and chromosomal stability. DNA accessibility is regulated via a complex set of post-translational modifications of histones, also called histone code, and nucleosome remodeling. The protein is Histone H4 (H4-I) of Volvox carteri (Green alga).